The sequence spans 482 residues: tRNA sulfurtransferase (482 aa).

In terms of domain architecture, THUMP spans 61 to 165 (SAIRDALTRI…QDRLLLIKGR (105 aa)). Residues 183 to 184 (LI), Lys265, Gly287, and Gln296 contribute to the ATP site. Cys344 and Cys456 are oxidised to a cystine. In terms of domain architecture, Rhodanese spans 404–482 (FAPTDVLLDI…GFSNVKVYRP (79 aa)). Catalysis depends on Cys456, which acts as the Cysteine persulfide intermediate.

This sequence belongs to the ThiI family.

Its subcellular location is the cytoplasm. It carries out the reaction [ThiI sulfur-carrier protein]-S-sulfanyl-L-cysteine + a uridine in tRNA + 2 reduced [2Fe-2S]-[ferredoxin] + ATP + H(+) = [ThiI sulfur-carrier protein]-L-cysteine + a 4-thiouridine in tRNA + 2 oxidized [2Fe-2S]-[ferredoxin] + AMP + diphosphate. The catalysed reaction is [ThiS sulfur-carrier protein]-C-terminal Gly-Gly-AMP + S-sulfanyl-L-cysteinyl-[cysteine desulfurase] + AH2 = [ThiS sulfur-carrier protein]-C-terminal-Gly-aminoethanethioate + L-cysteinyl-[cysteine desulfurase] + A + AMP + 2 H(+). It functions in the pathway cofactor biosynthesis; thiamine diphosphate biosynthesis. Functionally, catalyzes the ATP-dependent transfer of a sulfur to tRNA to produce 4-thiouridine in position 8 of tRNAs, which functions as a near-UV photosensor. Also catalyzes the transfer of sulfur to the sulfur carrier protein ThiS, forming ThiS-thiocarboxylate. This is a step in the synthesis of thiazole, in the thiamine biosynthesis pathway. The sulfur is donated as persulfide by IscS. The chain is tRNA sulfurtransferase from Pectobacterium carotovorum subsp. carotovorum (strain PC1).